Here is a 377-residue protein sequence, read N- to C-terminus: D-alanine--D-alanine ligase (377 aa).

Positions K140–D349 constitute an ATP-grasp domain. Residue V170–L225 participates in ATP binding. Mg(2+) contacts are provided by D303, E316, and N318.

This sequence belongs to the D-alanine--D-alanine ligase family. Mg(2+) serves as cofactor. Requires Mn(2+) as cofactor.

Its subcellular location is the cytoplasm. The enzyme catalyses 2 D-alanine + ATP = D-alanyl-D-alanine + ADP + phosphate + H(+). Its pathway is cell wall biogenesis; peptidoglycan biosynthesis. Its function is as follows. Cell wall formation. The chain is D-alanine--D-alanine ligase from Leuconostoc citreum (strain KM20).